The following is a 276-amino-acid chain: Elongation factor Ts, mitochondrial (276 aa).

Belongs to the EF-Ts family.

It is found in the mitochondrion. In terms of biological role, associates with the EF-Tu.GDP complex and induces the exchange of GDP to GTP. It remains bound to the aminoacyl-tRNA.EF-Tu.GTP complex up to the GTP hydrolysis stage on the ribosome. The chain is Elongation factor Ts, mitochondrial from Leishmania braziliensis.